A 1170-amino-acid polypeptide reads, in one-letter code: Anion exchange protein 3 (1170 aa).

Over 1-656 the chain is Cytoplasmic; it reads MGRSYNEKDF…DLKDALDTQC (656 aa). Disordered stretches follow at residues 17–96, 112–167, and 239–267; these read FHHT…PQLS, FHME…TTRG, and HLVK…RRKR. Positions 32-53 are enriched in basic residues; that stretch reads RFRKRVLSMDRRRKRKRKKKKT. Over residues 67 to 76 the composition is skewed to acidic residues; sequence VDEEEAESEI. Polar residues predominate over residues 246–259; that stretch reads RCQLPRSSNGSPPL. Helical transmembrane passes span 657–677, 702–722, 744–764, 774–794, and 828–848; these read IAAV…FGGL, FSLL…LLVF, IGFW…SFLV, IFAF…LIKV, and PNTA…AFFL. The interval 657–1170 is membrane (anion exchange); sequence IAAVIFIYFA…DEYNEIHMLV (514 aa). Residues 849–863 are Cytoplasmic-facing; the sequence is RKLRNSRFLGGKVRR. Helical transmembrane passes span 864–884, 919–939, 966–986, 1020–1063, and 1104–1124; these read VIGD…DILI, FPVW…ILIF, LLLI…WLTA, RVTG…LTGI, and IVLL…FILI.

Belongs to the anion exchanger (TC 2.A.31) family. Widely expressed at low levels.

It is found in the cell membrane. The catalysed reaction is hydrogencarbonate(in) + chloride(out) = hydrogencarbonate(out) + chloride(in). Its function is as follows. Sodium-independent anion exchanger which mediates the electroneutral exchange of chloride for bicarbonate ions across the cell membrane. May be involved in the regulation of intracellular pH, and the modulation of cardiac action potential. This Danio rerio (Zebrafish) protein is Anion exchange protein 3.